We begin with the raw amino-acid sequence, 277 residues long: Large ribosomal subunit protein uL2c (277 aa).

The interval 30-60 (RKKLTSGQHSGKGRNNRGIITSRHRGGGHKR) is disordered. The span at 51 to 60 (SRHRGGGHKR) shows a compositional bias: basic residues.

This sequence belongs to the universal ribosomal protein uL2 family. As to quaternary structure, part of the 50S ribosomal subunit.

It is found in the plastid. It localises to the chloroplast. This Angiopteris evecta (Mule's foot fern) protein is Large ribosomal subunit protein uL2c (rpl2).